Here is a 163-residue protein sequence, read N- to C-terminus: Adenosine 5'-monophosphoramidase HINT2 (163 aa).

The transit peptide at 1 to 17 (MAAAVLLAVGLRAARRT) directs the protein to the mitochondrion. Lysine 45 carries the N6-succinyllysine modification. The region spanning 55 to 163 (IFSRILDRSL…GGRQLQWPPG (109 aa)) is the HIT domain. Residues serine 63 and aspartate 80 each coordinate AMP. The residue at position 119 (lysine 119) is an N6-acetyllysine. Residue lysine 128 is modified to N6-acetyllysine; alternate. Lysine 128 is subject to N6-succinyllysine; alternate. An AMP-binding site is contributed by asparagine 136. Residue lysine 139 is modified to N6-acetyllysine. Residues 142–145 (AQSV) and 149–151 (HIH) each bind AMP. The Histidine triad motif motif lies at 147-151 (HLHIH). The active-site Tele-AMP-histidine intermediate is the histidine 149.

Belongs to the HINT family.

It is found in the mitochondrion. It carries out the reaction adenosine 5'-phosphoramidate + H2O = AMP + NH4(+). In terms of biological role, exhibits adenosine 5'-monophosphoramidase activity, hydrolyzing purine nucleotide phosphoramidates with a single phosphate group such as adenosine 5'monophosphoramidate (AMP-NH2) to yield AMP and NH2. Hydrolyzes adenosine 5'-O-p-nitrophenylphosphoramidate (AMP-pNA). May be involved in steroid biosynthesis. May play a role in apoptosis. The protein is Adenosine 5'-monophosphoramidase HINT2 of Mus musculus (Mouse).